The primary structure comprises 530 residues: Cytochrome P450 monooxygenase aneG (530 aa).

A glycan (N-linked (GlcNAc...) asparagine) is linked at Asn-2. Residues 43 to 63 (WLSILGFTIGCYYVIYTFYAL) form a helical membrane-spanning segment. Asn-92 is a glycosylation site (N-linked (GlcNAc...) asparagine). Cys-474 contributes to the heme binding site.

The protein belongs to the cytochrome P450 family. Heme is required as a cofactor.

It localises to the membrane. The enzyme catalyses asperaculane E + reduced [NADPH--hemoprotein reductase] + O2 = asperaculane G + oxidized [NADPH--hemoprotein reductase] + H2O + H(+). It catalyses the reaction asperaculane G + reduced [NADPH--hemoprotein reductase] + O2 = aculene D + oxidized [NADPH--hemoprotein reductase] + CO2 + 2 H2O. The catalysed reaction is asperaculane E + 2 reduced [NADPH--hemoprotein reductase] + 2 O2 = aculene D + 2 oxidized [NADPH--hemoprotein reductase] + CO2 + 3 H2O + H(+). The protein operates within secondary metabolite biosynthesis. In terms of biological role, cytochrome P450 monooxygenase; part of the gene cluster that mediates the biosynthesis of aculenes, a unique type of norsesquiterpenes that contain a nordaucane skeleton linked to an L-proline moiety and are of mixed biosynthetic origin. The pathway begins with the synthesis of dauca-4,7-diene by the terpene cyclase aneC using farnesyl pyrophosphate (FPP) as substrate. The cytochrome P450 monooxygenase aneF then performs the initial oxidation at C-12 of dauca-4,7-diene to yield asperaculane D. Asperaculane D is substrate of the cytochrome P450 monooxygenase aneD for C-10 hydroxylation to yield asperaculane E. The cytochrome P450 monooxygenase aneG then converts asperaculane E into aculene D via C-2 oxidation. The monomodular nonribosomal peptide synthtase aneB adenylates L-proline and the thiohydrolase aneE transfers this activated L-proline derivative to aculenes D and C to produce respectively aculenes B and A. The dioxygenase aneA converts aculene D into aculene C, and aculene B into aculene A by introducing the 5,6-alkene moiety. Asperculanes A, B, C and F, as well as 14-prolyl asperculane C, might be shunt products of the pathway. The protein is Cytochrome P450 monooxygenase aneG of Aspergillus aculeatus (strain ATCC 16872 / CBS 172.66 / WB 5094).